Here is a 243-residue protein sequence, read N- to C-terminus: Proteasome subunit beta 1 (243 aa).

Over residues 1–14 the composition is skewed to polar residues; it reads MRAPQHNSDFSRTV. Positions 1–34 are disordered; the sequence is MRAPQHNSDFSRTVDQLADDPNPYEPEIGSMPQN. Positions 1 to 48 are cleaved as a propeptide — removed in mature form; by autocatalysis; the sequence is MRAPQHNSDFSRTVDQLADDPNPYEPEIGSMPQNDLTRADLDNVNKTG. Thr-49 functions as the Nucleophile in the catalytic mechanism.

This sequence belongs to the peptidase T1B family. As to quaternary structure, the 20S proteasome core is composed of 14 alpha and 14 beta subunits that assemble into four stacked heptameric rings, resulting in a barrel-shaped structure. The two inner rings, each composed of seven catalytic beta subunits, are sandwiched by two outer rings, each composed of seven alpha subunits. The catalytic chamber with the active sites is on the inside of the barrel. Has a gated structure, the ends of the cylinder being occluded by the N-termini of the alpha-subunits. Is capped at one or both ends by the proteasome regulatory ATPase, PAN.

It is found in the cytoplasm. The catalysed reaction is Cleavage of peptide bonds with very broad specificity.. The formation of the proteasomal ATPase PAN-20S proteasome complex, via the docking of the C-termini of PAN into the intersubunit pockets in the alpha-rings, triggers opening of the gate for substrate entry. Interconversion between the open-gate and close-gate conformations leads to a dynamic regulation of the 20S proteasome proteolysis activity. Its function is as follows. Component of the proteasome core, a large protease complex with broad specificity involved in protein degradation. This Haloterrigena turkmenica (strain ATCC 51198 / DSM 5511 / JCM 9101 / NCIMB 13204 / VKM B-1734 / 4k) (Halococcus turkmenicus) protein is Proteasome subunit beta 1.